Consider the following 372-residue polypeptide: Homeobox protein Nkx-2.1 (372 aa).

Residues R161–A220 constitute a DNA-binding region (homeobox). 3 disordered regions span residues Q219–R258, K269–Q288, and A312–G340. The segment covering S233–G244 has biased composition (gly residues). Residues C245–Q254 are compositionally biased toward low complexity. Phosphoserine is present on S255. Low complexity predominate over residues A273–Q288.

It belongs to the NK-2 homeobox family. Interacts with WWTR1. In terms of processing, phosphorylated on serine residues by STK3/MST2. Thyroid, lung and brain.

Its subcellular location is the nucleus. Functionally, transcription factor that binds and activates the promoter of thyroid specific genes such as thyroglobulin, thyroperoxidase, and thyrotropin receptor. Crucial in the maintenance of the thyroid differentiation phenotype. May play a role in lung development and surfactant homeostasis. Forms a regulatory loop with GRHL2 that coordinates lung epithelial cell morphogenesis and differentiation. Activates the transcription of GNRHR and plays a role in enhancing the circadian oscillation of its gene expression. Represses the transcription of the circadian transcriptional repressor NR1D1. The polypeptide is Homeobox protein Nkx-2.1 (Mus musculus (Mouse)).